Here is a 149-residue protein sequence, read N- to C-terminus: Internal scaffolding protein ORF3 (149 aa).

This sequence belongs to the microvidae B protein family.

It localises to the host cytoplasm. In terms of biological role, participates in the assembly of the viral procapsid in the cytoplasm. Released from the procapsid upon genome packaging, possibly through affinity displacement by the protein ORF8, or by proteolysis. In Spiroplasma virus 4 (SpV4), this protein is Internal scaffolding protein ORF3.